The following is a 1379-amino-acid chain: Vascular endothelial growth factor receptor 3 (1379 aa).

The first 19 residues, 1-19, serve as a signal peptide directing secretion; the sequence is MKRVCTLPLWLWLGIVSEA. At 20 to 788 the chain is on the extracellular side; that stretch reads DLVSSYSMTP…EGSDDKTNVE (769 aa). Ig-like C2-type domains follow at residues 30 to 136, 160 to 222, 240 to 335, 340 to 421, 430 to 566, 569 to 684, and 691 to 777; these read PTLS…TAVS, KENT…IDNK, DIQL…TDVI, PFIN…KRIS, PRIH…FYVT, PDGF…KYIS, and PRLK…ASVS. Cystine bridges form between Cys51–Cys120 and Cys167–Cys215. The segment at 73–93 is disordered; it reads RRWNSQPQQRPVGAGNPEEDC. Residues Asn113, Asn175, Asn260, and Asn308 are each glycosylated (N-linked (GlcNAc...) asparagine). Cysteines 261 and 319 form a disulfide. Cystine bridges form between Cys453-Cys548, Cys474-Cys500, and Cys592-Cys666. Asn529, Asn541, Asn596, Asn608, Asn655, Asn696, and Asn703 each carry an N-linked (GlcNAc...) asparagine glycan. Cys712 and Cys761 are oxidised to a cystine. N-linked (GlcNAc...) asparagine glycosylation is present at Asn771. A helical transmembrane segment spans residues 789 to 809; sequence IVILIGTGVIAVFFWILLIII. The Cytoplasmic portion of the chain corresponds to 810–1379; it reads FCNIKRPAHA…LHASFFSEQY (570 aa). A Protein kinase domain is found at 858 to 1185; sequence LRLGKVLGHG…DLVEILGNLL (328 aa). ATP contacts are provided by residues 864 to 872 and Lys892; that span reads LGHGAFGKV. Catalysis depends on Asp1049, which acts as the Proton acceptor. Tyr1075 and Tyr1080 each carry phosphotyrosine; by autocatalysis. The segment at 1196–1224 is disordered; it reads YIPLNDSHSSEDDGFSQVPSSAQQNSDEE. Residues Tyr1239, Tyr1240, Tyr1274, Tyr1342, and Tyr1346 each carry the phosphotyrosine; by autocatalysis modification. The interval 1299–1379 is disordered; sequence RHRKEGGFSS…LHASFFSEQY (81 aa). The span at 1332 to 1343 shows a compositional bias: polar residues; the sequence is YGSQVGGQTFYN.

The protein belongs to the protein kinase superfamily. Tyr protein kinase family. CSF-1/PDGF receptor subfamily. Interacts with VEGFC and VEGFD. Monomer in the absence of bound VEGFC or VEGFD. Homodimer in the presence of bound VEGFC or VEGFD. Post-translationally, autophosphorylated on tyrosine residues upon ligand binding. Autophosphorylation occurs in trans, i.e. one subunit of the dimeric receptor phosphorylates tyrosine residues on the other subunit.

It is found in the cell membrane. Its subcellular location is the cytoplasm. It localises to the nucleus. It catalyses the reaction L-tyrosyl-[protein] + ATP = O-phospho-L-tyrosyl-[protein] + ADP + H(+). Present in an inactive conformation in the absence of bound ligand. Binding of VEGFC or VEGFD leads to dimerization and activation by autophosphorylation on tyrosine residues. Its function is as follows. Tyrosine-protein kinase that acts as a cell-surface receptor for VEGFC and VEGFD, and plays an essential role in lymphangiogenesis and in the development of the vascular network and the cardiovascular system during embryonic development. Promotes proliferation, survival and migration of endothelial cells, and regulates angiogenic sprouting. Mediates activation of the MAPK1/ERK2, MAPK3/ERK1 signaling pathway, of MAPK8 and the JUN signaling pathway, and of the AKT1 signaling pathway. The chain is Vascular endothelial growth factor receptor 3 (FLT4) from Coturnix coturnix (Common quail).